We begin with the raw amino-acid sequence, 307 residues long: DDRGK domain-containing protein 1 (307 aa).

Topologically, residues 1–2 are lumenal; it reads MD. Residues 3–23 form a helical membrane-spanning segment; the sequence is LILLVGIATALLLILITLYFL. Over 24-307 the chain is Cytoplasmic; the sequence is QSKNAKTETK…TPVAAGESSA (284 aa). A disordered region spans residues 31-175; that stretch reads ETKAAAQPQR…EADRLAKEER (145 aa). The span at 52-83 shows a compositional bias: low complexity; sequence RRAQIARNQRNRLRQNQNAPAVAAAAAPAAAV. Residues 107–175 are compositionally biased toward basic and acidic residues; sequence LDEKMGAKKR…EADRLAKEER (69 aa).

It belongs to the DDRGK1 family. As to quaternary structure, interacts with Atg9; the interaction is transient.

It is found in the endoplasmic reticulum membrane. Substrate adapter for ufmylation, the covalent attachment of the ubiquitin-like modifier UFM1 to substrate proteins. Required for ufmylation of Atg9; protects the nervous system during aging, possibly by stabilizing Atg9 and supporting its function. The chain is DDRGK domain-containing protein 1 from Drosophila virilis (Fruit fly).